Consider the following 102-residue polypeptide: Co-chaperonin GroES (102 aa).

The protein belongs to the GroES chaperonin family. Heptamer of 7 subunits arranged in a ring. Interacts with the chaperonin GroEL.

It is found in the cytoplasm. In terms of biological role, together with the chaperonin GroEL, plays an essential role in assisting protein folding. The GroEL-GroES system forms a nano-cage that allows encapsulation of the non-native substrate proteins and provides a physical environment optimized to promote and accelerate protein folding. GroES binds to the apical surface of the GroEL ring, thereby capping the opening of the GroEL channel. This Chlamydia trachomatis serovar L2 (strain ATCC VR-902B / DSM 19102 / 434/Bu) protein is Co-chaperonin GroES.